We begin with the raw amino-acid sequence, 761 residues long: 5-methyltetrahydropteroyltriglutamate--homocysteine methyltransferase (761 aa).

5-methyltetrahydropteroyltri-L-glutamate is bound by residues 16–19 (RELK) and Lys-118. Residues 436–438 (IGS) and Glu-489 contribute to the L-homocysteine site. L-methionine is bound by residues 436-438 (IGS) and Glu-489. Residues 520–521 (RC) and Trp-566 contribute to the 5-methyltetrahydropteroyltri-L-glutamate site. Asp-604 lines the L-homocysteine pocket. Position 604 (Asp-604) interacts with L-methionine. A 5-methyltetrahydropteroyltri-L-glutamate-binding site is contributed by Glu-610. Residues His-646, Cys-648, and Glu-670 each coordinate Zn(2+). His-699 functions as the Proton donor in the catalytic mechanism. Cys-731 contributes to the Zn(2+) binding site.

It belongs to the vitamin-B12 independent methionine synthase family. Requires Zn(2+) as cofactor.

It carries out the reaction 5-methyltetrahydropteroyltri-L-glutamate + L-homocysteine = tetrahydropteroyltri-L-glutamate + L-methionine. The protein operates within amino-acid biosynthesis; L-methionine biosynthesis via de novo pathway; L-methionine from L-homocysteine (MetE route): step 1/1. In terms of biological role, catalyzes the transfer of a methyl group from 5-methyltetrahydrofolate to homocysteine resulting in methionine formation. The sequence is that of 5-methyltetrahydropteroyltriglutamate--homocysteine methyltransferase from Vibrio cholerae serotype O1 (strain ATCC 39315 / El Tor Inaba N16961).